We begin with the raw amino-acid sequence, 170 residues long: Large ribosomal subunit protein uL11 (170 aa).

Belongs to the universal ribosomal protein uL11 family. In terms of assembly, part of the ribosomal stalk of the 50S ribosomal subunit. Interacts with L10 and the large rRNA to form the base of the stalk. L10 forms an elongated spine to which L12 dimers bind in a sequential fashion forming a multimeric L10(L12)X complex.

Functionally, forms part of the ribosomal stalk which helps the ribosome interact with GTP-bound translation factors. In Sulfolobus acidocaldarius (strain ATCC 33909 / DSM 639 / JCM 8929 / NBRC 15157 / NCIMB 11770), this protein is Large ribosomal subunit protein uL11.